The sequence spans 219 residues: Probable glutathione S-transferase MSR-1 (219 aa).

In terms of domain architecture, GST N-terminal spans 4–83 (NNVVLLDFSG…YIDEVWHEKC (80 aa)). Glutathione is bound by residues Ser-14, Lys-41, Ile-55, and 67–68 (ES). One can recognise a GST C-terminal domain in the interval 89 to 208 (DPYQRSQARF…LPHPHKIYDF (120 aa)).

This sequence belongs to the GST superfamily. HSP26 family.

It carries out the reaction RX + glutathione = an S-substituted glutathione + a halide anion + H(+). May play an important role in hormonal and growth regulatory responses. The sequence is that of Probable glutathione S-transferase MSR-1 (MSR-1) from Nicotiana plumbaginifolia (Leadwort-leaved tobacco).